The primary structure comprises 430 residues: DNA-binding protein cre-1 (430 aa).

Positions 1-19 are enriched in polar residues; that stretch reads MQRVQSAVDFSNLLNPSES. Disordered stretches follow at residues 1-77, 97-187, 265-340, and 357-430; these read MQRV…LPRP, IRTH…PHSY, SRSH…RNLS, and LDGQ…MDRL. Low complexity predominate over residues 30–46; the sequence is PRQQTAQPQQQQQQPQP. 2 consecutive C2H2-type zinc fingers follow at residues 78 to 100 and 106 to 130; these read YKCPLCDKAFHRLEHQTRHIRTH and HACQFPGCSKKFSRSDELTRHSRIH. Residues 97-106 show a composition bias toward basic and acidic residues; it reads IRTHTGEKPH. 2 stretches are compositionally biased toward polar residues: residues 130-147 and 175-187; these read HSNPNSRRGNKGQQQQQH and AMSSPNVSPPHSY. A compositionally biased stretch (basic and acidic residues) spans 268-277; that stretch reads HSHEDHDDHY. Over residues 289 to 303 the composition is skewed to low complexity; that stretch reads PNSPNSTAPSSPTFS. A compositionally biased stretch (polar residues) spans 412–422; the sequence is SVRNSSSTSLS.

It belongs to the creA/MIG C2H2-type zinc-finger protein family.

It localises to the nucleus. Its function is as follows. Involved in carbon catabolite repression. Represses the transcription of a number of genes by binding to a GC-rich region in their promoter. The protein is DNA-binding protein cre-1 (cre-1) of Neurospora crassa (strain ATCC 24698 / 74-OR23-1A / CBS 708.71 / DSM 1257 / FGSC 987).